Reading from the N-terminus, the 342-residue chain is N-acetyl-gamma-glutamyl-phosphate reductase (342 aa).

The active site involves cysteine 149.

It belongs to the NAGSA dehydrogenase family. Type 1 subfamily.

Its subcellular location is the cytoplasm. The catalysed reaction is N-acetyl-L-glutamate 5-semialdehyde + phosphate + NADP(+) = N-acetyl-L-glutamyl 5-phosphate + NADPH + H(+). It participates in amino-acid biosynthesis; L-arginine biosynthesis; N(2)-acetyl-L-ornithine from L-glutamate: step 3/4. Catalyzes the NADPH-dependent reduction of N-acetyl-5-glutamyl phosphate to yield N-acetyl-L-glutamate 5-semialdehyde. This is N-acetyl-gamma-glutamyl-phosphate reductase from Ruegeria pomeroyi (strain ATCC 700808 / DSM 15171 / DSS-3) (Silicibacter pomeroyi).